A 371-amino-acid polypeptide reads, in one-letter code: Aldose sugar dehydrogenase YliI (371 aa).

A signal peptide spans 1–20 (MHRQSFFLVPLICLSSALWA). Glutamine 82 serves as a coordination point for pyrroloquinoline quinone. The active-site Proton acceptor is histidine 147. Positions 214-215 (RN) are PQQ. 2 residues coordinate Ca(2+): glutamate 240 and tyrosine 250. Tyrosine 261 is a pyrroloquinoline quinone binding site. PQQ stretches follow at residues 312–314 (ALK) and 341–343 (RIR).

Belongs to the PQQ oxidoreductase GdhB family. In terms of assembly, monomer. Ca(2+) is required as a cofactor. The cofactor is pyrroloquinoline quinone.

It localises to the cell outer membrane. In terms of biological role, aldose sugar dehydrogenase with broad substrate specificity. The physiological substrate is unknown. Can oxidize glucose to gluconolactone. Can also utilize D-arabinose, L-arabinose and 2-deoxy-glucose. Has higher activity towards oligomeric sugars, such as maltose, maltotriose or cellobiose. It may function to input sugar-derived electrons into the respiratory network. In Escherichia coli (strain K12), this protein is Aldose sugar dehydrogenase YliI (yliI).